We begin with the raw amino-acid sequence, 474 residues long: Probable glycine dehydrogenase (decarboxylating) subunit 2 (474 aa).

N6-(pyridoxal phosphate)lysine is present on lysine 262.

The protein belongs to the GcvP family. C-terminal subunit subfamily. As to quaternary structure, the glycine cleavage system is composed of four proteins: P, T, L and H. In this organism, the P 'protein' is a heterodimer of two subunits. The cofactor is pyridoxal 5'-phosphate.

The enzyme catalyses N(6)-[(R)-lipoyl]-L-lysyl-[glycine-cleavage complex H protein] + glycine + H(+) = N(6)-[(R)-S(8)-aminomethyldihydrolipoyl]-L-lysyl-[glycine-cleavage complex H protein] + CO2. Its function is as follows. The glycine cleavage system catalyzes the degradation of glycine. The P protein binds the alpha-amino group of glycine through its pyridoxal phosphate cofactor; CO(2) is released and the remaining methylamine moiety is then transferred to the lipoamide cofactor of the H protein. The polypeptide is Probable glycine dehydrogenase (decarboxylating) subunit 2 (Thermotoga maritima (strain ATCC 43589 / DSM 3109 / JCM 10099 / NBRC 100826 / MSB8)).